A 162-amino-acid chain; its full sequence is Transcription elongation factor GreA (162 aa).

Positions 44–69 form a coiled coil; sequence SENAEYEAAREKQAFVEARIKHLEDI.

This sequence belongs to the GreA/GreB family.

Its function is as follows. Necessary for efficient RNA polymerase transcription elongation past template-encoded arresting sites. The arresting sites in DNA have the property of trapping a certain fraction of elongating RNA polymerases that pass through, resulting in locked ternary complexes. Cleavage of the nascent transcript by cleavage factors such as GreA or GreB allows the resumption of elongation from the new 3'terminus. GreA releases sequences of 2 to 3 nucleotides. In Rickettsia bellii (strain RML369-C), this protein is Transcription elongation factor GreA.